The primary structure comprises 199 residues: Patulin biosynthesis cluster protein F (199 aa).

An N-terminal signal peptide occupies residues 1-21 (MKSSLWVSLAVSLIGLGPAAA). 2 N-linked (GlcNAc...) asparagine glycosylation sites follow: Asn129 and Asn183.

This sequence belongs to the patF family.

The protein resides in the cytoplasm. Its subcellular location is the cytosol. It carries out the reaction phyllostine = neopatulin. It participates in mycotoxin biosynthesis; patulin biosynthesis. Part of the gene cluster that mediates the biosynthesis of patulin, an acetate-derived tetraketide mycotoxin produced by several fungal species that shows antimicrobial properties against several bacteria. PatF catalyzes the conversion of phyllostine into neopatulin. The pathway begins with the synthesis of 6-methylsalicylic acid by the polyketide synthase (PKS) patK via condensation of acetate and malonate units. The 6-methylsalicylic acid decarboxylase patG then catalyzes the decarboxylation of 6-methylsalicylic acid to yield m-cresol (also known as 3-methylphenol). These first reactions occur in the cytosol. The intermediate m-cresol is then transported into the endoplasmic reticulum where the cytochrome P450 monooxygenase patH converts it to m-hydroxybenzyl alcohol, which is further converted to gentisyl alcohol by the cytochrome P450 monooxygenase patI. The oxidoreductases patJ and patO further convert gentisyl alcohol to isoepoxydon in the vacuole. PatN catalyzes then the transformation of isoepoxydon into phyllostine. The cluster protein patF is responsible for the conversion from phyllostine to neopatulin whereas the alcohol dehydrogenase patD converts neopatulin to E-ascladiol. The steps between isoepoxydon and E-ascladiol occur in the cytosol, and E-ascladiol is probably secreted to the extracellular space by one of the cluster-specific transporters patC or patM. Finally, the secreted patulin synthase patE catalyzes the conversion of E-ascladiol to patulin. This is Patulin biosynthesis cluster protein F from Penicillium expansum (Blue mold rot fungus).